A 156-amino-acid chain; its full sequence is 6,7-dimethyl-8-ribityllumazine synthase (156 aa).

Residues Phe-22, Ala-57 to Glu-59, and Thr-81 to Ile-83 each bind 5-amino-6-(D-ribitylamino)uracil. Gly-86–Thr-87 serves as a coordination point for (2S)-2-hydroxy-3-oxobutyl phosphate. The active-site Proton donor is His-89. Phe-114 provides a ligand contact to 5-amino-6-(D-ribitylamino)uracil. Arg-128 serves as a coordination point for (2S)-2-hydroxy-3-oxobutyl phosphate.

This sequence belongs to the DMRL synthase family. As to quaternary structure, forms an icosahedral capsid composed of 60 subunits, arranged as a dodecamer of pentamers.

It carries out the reaction (2S)-2-hydroxy-3-oxobutyl phosphate + 5-amino-6-(D-ribitylamino)uracil = 6,7-dimethyl-8-(1-D-ribityl)lumazine + phosphate + 2 H2O + H(+). It functions in the pathway cofactor biosynthesis; riboflavin biosynthesis; riboflavin from 2-hydroxy-3-oxobutyl phosphate and 5-amino-6-(D-ribitylamino)uracil: step 1/2. In terms of biological role, catalyzes the formation of 6,7-dimethyl-8-ribityllumazine by condensation of 5-amino-6-(D-ribitylamino)uracil with 3,4-dihydroxy-2-butanone 4-phosphate. This is the penultimate step in the biosynthesis of riboflavin. The polypeptide is 6,7-dimethyl-8-ribityllumazine synthase (Salmonella agona (strain SL483)).